The sequence spans 290 residues: Protein MGF 110-9L (290 aa).

The N-terminal stretch at 1 to 19 (MKVIVLLLVLAVMQPVIQS) is a signal peptide. The stretch at 1–160 (MKVIVLLLVL…QYSRMRMQAA (160 aa)) is one A repeat. The next 2 membrane-spanning stretches (helical) occupy residues 128–148 (VENIKHTCLCMIATIALIGYV) and 163–183 (LLIFLGLYVLLGILMTNIIMN). A B repeat occupies 161–290 (TRLLIFLGLY…KRHVINQDDL (130 aa)).

The protein belongs to the asfivirus MGF 110 family.

It localises to the membrane. This chain is Protein MGF 110-9L, found in Ornithodoros (relapsing fever ticks).